The sequence spans 461 residues: Diacylglycerol O-acyltransferase 1 (461 aa).

Residues 1-38 (MQDSMDDSLREAEGRQDDSEVSSGTTLGSSTPEDSGVT) are disordered. Over 1-112 (MQDSMDDSLR…TLVVAWHTSS (112 aa)) the chain is Cytoplasmic. The span at 7-18 (DSLREAEGRQDD) shows a compositional bias: basic and acidic residues. The span at 21-33 (VSSGTTLGSSTPE) shows a compositional bias: polar residues. A helical transmembrane segment spans residues 113–133 (FIYMTVLVLFLAANPLMWWFM). Residues 134 to 230 (VPYMVYYVWN…ARPQVATGPR (97 aa)) are Lumenal-facing. The helical transmembrane segment at 231–251 (YIFGYHPHGVGALGAFGAIAT) threads the bilayer. Residues 252–258 (EGCNWSK) lie on the Cytoplasmic side of the membrane. Residues 259–279 (VFAGIPACLCTLVNQFQIPIY) traverse the membrane as a helical segment. The Lumenal segment spans residues 280-332 (RDYLLGLGCTSVARKNVLKVLEQNYSVCIVVGGAQEALLSRVGSTELVLNKRK). The chain crosses the membrane as a helical span at residues 333-353 (GFIKLALETGNVNLVPIYAFG). At 354–461 (ETDCFNVLDT…YAGKELKIVE (108 aa)) the chain is on the cytoplasmic side.

Belongs to the diacylglycerol acyltransferase family.

The protein localises to the lipid droplet. The protein resides in the endoplasmic reticulum membrane. It catalyses the reaction an acyl-CoA + a 1,2-diacyl-sn-glycerol = a triacyl-sn-glycerol + CoA. It carries out the reaction a 2-acylglycerol + an acyl-CoA = a 1,2-diacyl-sn-glycerol + CoA. Its pathway is glycerolipid metabolism; triacylglycerol biosynthesis. Functionally, catalyzes the terminal and only committed step in triacylglycerol (TAG) synthesis by using diacylglycerol (DAG) and fatty acyl-CoA as substrates. Required for storage lipid synthesis. Major DAG esterifying enzyme in stationary phase when TAG production is particularly active. Involved in lipid particle synthesis from the endoplasmic reticulum, promoting localized TAG production at discrete ER subdomains. The sequence is that of Diacylglycerol O-acyltransferase 1 (DGA1) from Eremothecium gossypii (strain ATCC 10895 / CBS 109.51 / FGSC 9923 / NRRL Y-1056) (Yeast).